The primary structure comprises 230 residues: Orotidine 5'-phosphate decarboxylase (230 aa).

Substrate contacts are provided by residues Asp-11, Lys-34, 61–70 (DLKLHDIPNT), Thr-117, Arg-179, Gln-188, Gly-208, and Arg-209. The active-site Proton donor is Lys-63.

The protein belongs to the OMP decarboxylase family. Type 1 subfamily. Homodimer.

The enzyme catalyses orotidine 5'-phosphate + H(+) = UMP + CO2. It functions in the pathway pyrimidine metabolism; UMP biosynthesis via de novo pathway; UMP from orotate: step 2/2. Catalyzes the decarboxylation of orotidine 5'-monophosphate (OMP) to uridine 5'-monophosphate (UMP). This Streptococcus gordonii (strain Challis / ATCC 35105 / BCRC 15272 / CH1 / DL1 / V288) protein is Orotidine 5'-phosphate decarboxylase.